Here is a 280-residue protein sequence, read N- to C-terminus: Pantothenate synthetase (280 aa).

30-37 (MGYLHEGH) serves as a coordination point for ATP. His-37 serves as the catalytic Proton donor. Residue Gln-61 coordinates (R)-pantoate. Gln-61 contacts beta-alanine. Residue 147–150 (GKKD) participates in ATP binding. Position 153 (Gln-153) interacts with (R)-pantoate. Residues Val-176 and 184–187 (MSSR) contribute to the ATP site.

The protein belongs to the pantothenate synthetase family. As to quaternary structure, homodimer.

The protein resides in the cytoplasm. It catalyses the reaction (R)-pantoate + beta-alanine + ATP = (R)-pantothenate + AMP + diphosphate + H(+). It participates in cofactor biosynthesis; (R)-pantothenate biosynthesis; (R)-pantothenate from (R)-pantoate and beta-alanine: step 1/1. Catalyzes the condensation of pantoate with beta-alanine in an ATP-dependent reaction via a pantoyl-adenylate intermediate. The sequence is that of Pantothenate synthetase from Sulfurihydrogenibium sp. (strain YO3AOP1).